The chain runs to 170 residues: Lipocalin Cav p 2.0101 (170 aa).

Positions 1 to 16 are cleaved as a signal peptide; sequence MMQILLLALAVSLACA. 2 disulfides stabilise this stretch: C56-C60 and C75-C168.

Belongs to the calycin superfamily. Lipocalin family. Post-translationally, not N-linked glycosylated. As to expression, expressed in harderian gland (at protein level). Expressed in hair (at protein level). Expressed in submaxillary gland and harderian gland.

Its subcellular location is the secreted. This Cavia porcellus (Guinea pig) protein is Lipocalin Cav p 2.0101 (Lcncavp2).